We begin with the raw amino-acid sequence, 339 residues long: D-erythrose-4-phosphate dehydrogenase (339 aa).

11-12 (RI) is a binding site for NAD(+). Substrate contacts are provided by residues 158 to 160 (SCT), Arg204, 217 to 218 (TK), and Arg240. Cys159 acts as the Nucleophile in catalysis. Asn322 contributes to the NAD(+) binding site.

It belongs to the glyceraldehyde-3-phosphate dehydrogenase family. Epd subfamily. Homotetramer.

Its subcellular location is the cytoplasm. The enzyme catalyses D-erythrose 4-phosphate + NAD(+) + H2O = 4-phospho-D-erythronate + NADH + 2 H(+). It participates in cofactor biosynthesis; pyridoxine 5'-phosphate biosynthesis; pyridoxine 5'-phosphate from D-erythrose 4-phosphate: step 1/5. Catalyzes the NAD-dependent conversion of D-erythrose 4-phosphate to 4-phosphoerythronate. This is D-erythrose-4-phosphate dehydrogenase from Aliivibrio fischeri (strain MJ11) (Vibrio fischeri).